Here is a 1203-residue protein sequence, read N- to C-terminus: Transmembrane channel-like protein 2 (1203 aa).

Disordered stretches follow at residues 1 to 39 and 64 to 90; these read MPKS…IDSR and PHTR…EASK. The span at 73–86 shows a compositional bias: acidic residues; the sequence is FDDDDDEFDEEDDK. A helical transmembrane segment spans residues 191–213; it reads VLGVNITITFIMCMFVVIPEWLA. A glycan (N-linked (GlcNAc...) asparagine) is linked at Asn-225. 6 consecutive transmembrane segments (helical) span residues 276–298, 369–391, 406–428, 441–463, 665–687, and 714–736; these read YRVP…FIIL, FVAR…WAIM, ATAI…LGKI, LGRV…MLQL, MIWL…LIIL, and FFFA…VIAS. The N-linked (GlcNAc...) asparagine glycan is linked to Asn-748. Residues 780 to 802 form a helical membrane-spanning segment; sequence IIIPVLVLLSLVIYFLIAMVTGL. 4 disordered regions span residues 826–908, 927–1039, 1059–1087, and 1112–1203; these read ELAG…SLPP, KYGR…IEKQ, ATVE…HEPL, and NDET…SDND. Residues 865-874 are compositionally biased toward polar residues; that stretch reads NRSTAKSVSG. Residues 898 to 908 show a composition bias toward low complexity; the sequence is DSESTTSSLPP. Residues 927–945 are compositionally biased toward basic and acidic residues; it reads KYGRHDDIEMEEGGGRLRE. Low complexity-rich tracts occupy residues 973–997 and 1022–1035; these read QSFD…PSNS and SASS…PSSS. A compositionally biased stretch (polar residues) spans 1061–1076; it reads VENSSQDPTRPPSTDD. Basic and acidic residues-rich tracts occupy residues 1133-1147 and 1172-1203; these read SPRE…KDQQ and PPSE…SDND.

The protein belongs to the TMC family.

The protein resides in the membrane. Its function is as follows. Probable ion channel. This is Transmembrane channel-like protein 2 (tmc-2) from Caenorhabditis elegans.